A 267-amino-acid polypeptide reads, in one-letter code: 3-methyl-2-oxobutanoate hydroxymethyltransferase (267 aa).

Mg(2+) contacts are provided by Asp-46 and Asp-85. Residues 46–47, Asp-85, and Lys-115 each bind 3-methyl-2-oxobutanoate; that span reads DS. A Mg(2+)-binding site is contributed by Glu-117. Glu-184 acts as the Proton acceptor in catalysis.

Belongs to the PanB family. As to quaternary structure, homodecamer; pentamer of dimers. It depends on Mg(2+) as a cofactor.

It localises to the cytoplasm. It carries out the reaction 3-methyl-2-oxobutanoate + (6R)-5,10-methylene-5,6,7,8-tetrahydrofolate + H2O = 2-dehydropantoate + (6S)-5,6,7,8-tetrahydrofolate. It functions in the pathway cofactor biosynthesis; (R)-pantothenate biosynthesis; (R)-pantoate from 3-methyl-2-oxobutanoate: step 1/2. Its function is as follows. Catalyzes the reversible reaction in which hydroxymethyl group from 5,10-methylenetetrahydrofolate is transferred onto alpha-ketoisovalerate to form ketopantoate. This Geotalea uraniireducens (strain Rf4) (Geobacter uraniireducens) protein is 3-methyl-2-oxobutanoate hydroxymethyltransferase.